A 99-amino-acid polypeptide reads, in one-letter code: Cytochrome c-555 (99 aa).

Residues cysteine 23, cysteine 26, histidine 27, and methionine 73 each coordinate heme c.

Post-translationally, binds 1 heme c group covalently per subunit.

This chain is Cytochrome c-555, found in Prosthecochloris aestuarii.